The primary structure comprises 764 residues: 5-methyltetrahydropteroyltriglutamate--homocysteine methyltransferase (764 aa).

5-methyltetrahydropteroyltri-L-glutamate is bound by residues 16-19 (RELK) and Lys-117. Residues 442 to 444 (IGS) and Glu-495 contribute to the L-homocysteine site. L-methionine-binding positions include 442–444 (IGS) and Glu-495. 5-methyltetrahydropteroyltri-L-glutamate contacts are provided by residues 526–527 (RC) and Trp-572. Asp-610 provides a ligand contact to L-homocysteine. Asp-610 is a binding site for L-methionine. Residue Glu-616 coordinates 5-methyltetrahydropteroyltri-L-glutamate. Residues His-652, Cys-654, and Glu-676 each coordinate Zn(2+). His-705 functions as the Proton donor in the catalytic mechanism. Zn(2+) is bound at residue Cys-737.

It belongs to the vitamin-B12 independent methionine synthase family. It depends on Zn(2+) as a cofactor.

The enzyme catalyses 5-methyltetrahydropteroyltri-L-glutamate + L-homocysteine = tetrahydropteroyltri-L-glutamate + L-methionine. The protein operates within amino-acid biosynthesis; L-methionine biosynthesis via de novo pathway; L-methionine from L-homocysteine (MetE route): step 1/1. Its function is as follows. Catalyzes the transfer of a methyl group from 5-methyltetrahydrofolate to homocysteine resulting in methionine formation. This Bordetella petrii (strain ATCC BAA-461 / DSM 12804 / CCUG 43448) protein is 5-methyltetrahydropteroyltriglutamate--homocysteine methyltransferase.